The sequence spans 204 residues: Ribonuclease HII (204 aa).

One can recognise an RNase H type-2 domain in the interval 1-197; that stretch reads MILGIDEAGR…KNRILNPKLL (197 aa). 3 residues coordinate a divalent metal cation: D6, E7, and D103.

It belongs to the RNase HII family. The cofactor is Mn(2+). It depends on Mg(2+) as a cofactor.

It localises to the cytoplasm. The enzyme catalyses Endonucleolytic cleavage to 5'-phosphomonoester.. In terms of biological role, endonuclease that specifically degrades the RNA of RNA-DNA hybrids. This is Ribonuclease HII from Helicobacter pylori (strain G27).